Consider the following 325-residue polypeptide: tRNA(Ile)-lysidine synthase (325 aa).

Residue 34–39 participates in ATP binding; the sequence is SGGQDS.

The protein belongs to the tRNA(Ile)-lysidine synthase family.

The protein resides in the cytoplasm. The enzyme catalyses cytidine(34) in tRNA(Ile2) + L-lysine + ATP = lysidine(34) in tRNA(Ile2) + AMP + diphosphate + H(+). Its function is as follows. Ligates lysine onto the cytidine present at position 34 of the AUA codon-specific tRNA(Ile) that contains the anticodon CAU, in an ATP-dependent manner. Cytidine is converted to lysidine, thus changing the amino acid specificity of the tRNA from methionine to isoleucine. This is tRNA(Ile)-lysidine synthase from Synechococcus sp. (strain ATCC 27144 / PCC 6301 / SAUG 1402/1) (Anacystis nidulans).